Reading from the N-terminus, the 149-residue chain is Transcriptional repressor NrdR (149 aa).

The segment at 3-34 (CPFCSHSETQVVETRISEDGDSIRRRRQCASC) is a zinc-finger region. In terms of domain architecture, ATP-cone spans 49 to 139 (PAIVKKDGRR…VYRSFEDIDE (91 aa)).

The protein belongs to the NrdR family. The cofactor is Zn(2+).

In terms of biological role, negatively regulates transcription of bacterial ribonucleotide reductase nrd genes and operons by binding to NrdR-boxes. This Albidiferax ferrireducens (strain ATCC BAA-621 / DSM 15236 / T118) (Rhodoferax ferrireducens) protein is Transcriptional repressor NrdR.